The sequence spans 239 residues: Nicotinamide riboside transporter PnuC (239 aa).

Topologically, residues 1 to 21 (MDFFSVQNILVHIPIGAGGYD) are cytoplasmic. A helical transmembrane segment spans residues 22 to 42 (LSWIEAVGTIAGLLCIGLASL). At 43-48 (EKISNY) the chain is on the periplasmic side. A helical transmembrane segment spans residues 49–68 (FFGLINVTLFGIIFFQIQLY). The Cytoplasmic portion of the chain corresponds to 69–71 (ASL). The chain crosses the membrane as a helical span at residues 72–89 (LLQVFFFAANIYGWYAWS). Over 90–109 (RQTSQNEAELKIRWLPLPKA) the chain is Periplasmic. A helical transmembrane segment spans residues 110 to 127 (LSWLAVCVVSIGLMTVFI). At 128 to 157 (NPVFAFLTRVAVMIMQALGLQVVMPELQPD) the chain is on the cytoplasmic side. Residues 158–177 (AFPFWDSCMMVLSIVAMILM) form a helical membrane-spanning segment. Topologically, residues 178 to 183 (TRKYVE) are periplasmic. Residues 184 to 206 (NWLLWVIINVISVVIFALQGVYA) traverse the membrane as a helical segment. Beta-nicotinamide D-riboside contacts are provided by Trp-188 and Asn-192. The Cytoplasmic segment spans residues 207–239 (MSLEYIILTFIALNGSRMWINSARERGSRALSH).

It belongs to the nicotinamide ribonucleoside (NR) uptake permease (TC 4.B.1) family.

It is found in the cell inner membrane. Required for nicotinamide riboside transport across the inner membrane. The sequence is that of Nicotinamide riboside transporter PnuC (pnuC) from Escherichia coli (strain K12).